The chain runs to 325 residues: 5-dehydro-2-deoxygluconokinase (325 aa).

It belongs to the carbohydrate kinase PfkB family.

It carries out the reaction 5-dehydro-2-deoxy-D-gluconate + ATP = 6-phospho-5-dehydro-2-deoxy-D-gluconate + ADP + H(+). It functions in the pathway polyol metabolism; myo-inositol degradation into acetyl-CoA; acetyl-CoA from myo-inositol: step 5/7. In terms of biological role, catalyzes the phosphorylation of 5-dehydro-2-deoxy-D-gluconate (2-deoxy-5-keto-D-gluconate or DKG) to 6-phospho-5-dehydro-2-deoxy-D-gluconate (DKGP). This Listeria monocytogenes serovar 1/2a (strain ATCC BAA-679 / EGD-e) protein is 5-dehydro-2-deoxygluconokinase.